Reading from the N-terminus, the 369-residue chain is Phospho-N-acetylmuramoyl-pentapeptide-transferase (369 aa).

Helical transmembrane passes span 3–23, 53–73, 81–101, 118–138, 162–182, 198–218, 240–260, 267–287, 290–310, and 347–367; these read ALLF…PLFI, GGIV…LLTW, VTPS…VGFL, WQKI…AITL, FMAL…CLIV, LAAG…FWQF, PLDL…FLWW, IFMG…LAIL, TELL…SVVL, and FWII…LEWI.

This sequence belongs to the glycosyltransferase 4 family. MraY subfamily. Requires Mg(2+) as cofactor.

The protein localises to the cell membrane. The enzyme catalyses UDP-N-acetyl-alpha-D-muramoyl-L-alanyl-gamma-D-glutamyl-meso-2,6-diaminopimeloyl-D-alanyl-D-alanine + di-trans,octa-cis-undecaprenyl phosphate = di-trans,octa-cis-undecaprenyl diphospho-N-acetyl-alpha-D-muramoyl-L-alanyl-D-glutamyl-meso-2,6-diaminopimeloyl-D-alanyl-D-alanine + UMP. It participates in cell wall biogenesis; peptidoglycan biosynthesis. In terms of biological role, catalyzes the initial step of the lipid cycle reactions in the biosynthesis of the cell wall peptidoglycan: transfers peptidoglycan precursor phospho-MurNAc-pentapeptide from UDP-MurNAc-pentapeptide onto the lipid carrier undecaprenyl phosphate, yielding undecaprenyl-pyrophosphoryl-MurNAc-pentapeptide, known as lipid I. The sequence is that of Phospho-N-acetylmuramoyl-pentapeptide-transferase from Clavibacter michiganensis subsp. michiganensis (strain NCPPB 382).